Consider the following 314-residue polypeptide: Vacuolar membrane protein SCY_4732 (314 aa).

The disordered stretch occupies residues 32–61 (KPTSSVVSETSSKSLPSLTSSAFSTSSGTT). A helical membrane pass occupies residues 93-113 (VYIAVGAVIGAIFISILIWWL). Residues serine 148, serine 254, and serine 274 each carry the phosphoserine modification. A disordered region spans residues 240–309 (EERKLNLNRP…PSMFLDDVLN (70 aa)). Residues 254-269 (SPERKEKKINSMEGYH) show a composition bias toward basic and acidic residues.

The protein belongs to the PRM5 family.

It is found in the vacuole membrane. This is Vacuolar membrane protein SCY_4732 from Saccharomyces cerevisiae (strain YJM789) (Baker's yeast).